Consider the following 546-residue polypeptide: Glucose-6-phosphate isomerase 1 (546 aa).

Residue Glu353 is the Proton donor of the active site. Catalysis depends on residues His384 and Lys512.

Belongs to the GPI family.

The protein resides in the cytoplasm. The enzyme catalyses alpha-D-glucose 6-phosphate = beta-D-fructose 6-phosphate. It functions in the pathway carbohydrate biosynthesis; gluconeogenesis. Its pathway is carbohydrate degradation; glycolysis; D-glyceraldehyde 3-phosphate and glycerone phosphate from D-glucose: step 2/4. Functionally, catalyzes the reversible isomerization of glucose-6-phosphate to fructose-6-phosphate. This chain is Glucose-6-phosphate isomerase 1, found in Colwellia psychrerythraea (strain 34H / ATCC BAA-681) (Vibrio psychroerythus).